We begin with the raw amino-acid sequence, 638 residues long: Threonine--tRNA ligase (638 aa).

A TGS domain is found at 1–63 (MVMIQIELPD…TESGRLEIIT (63 aa)). The tract at residues 245–536 (DHRRIGRELD…LIEHYAGNFP (292 aa)) is catalytic. Zn(2+) contacts are provided by Cys337, His388, and His513.

This sequence belongs to the class-II aminoacyl-tRNA synthetase family. In terms of assembly, homodimer. Zn(2+) serves as cofactor.

It is found in the cytoplasm. It catalyses the reaction tRNA(Thr) + L-threonine + ATP = L-threonyl-tRNA(Thr) + AMP + diphosphate + H(+). Functionally, catalyzes the attachment of threonine to tRNA(Thr) in a two-step reaction: L-threonine is first activated by ATP to form Thr-AMP and then transferred to the acceptor end of tRNA(Thr). Also edits incorrectly charged L-seryl-tRNA(Thr). The protein is Threonine--tRNA ligase of Syntrophotalea carbinolica (strain DSM 2380 / NBRC 103641 / GraBd1) (Pelobacter carbinolicus).